The following is a 215-amino-acid chain: Protein-L-isoaspartate O-methyltransferase (215 aa).

Residue S62 is part of the active site.

This sequence belongs to the methyltransferase superfamily. L-isoaspartyl/D-aspartyl protein methyltransferase family.

Its subcellular location is the cytoplasm. The enzyme catalyses [protein]-L-isoaspartate + S-adenosyl-L-methionine = [protein]-L-isoaspartate alpha-methyl ester + S-adenosyl-L-homocysteine. Functionally, catalyzes the methyl esterification of L-isoaspartyl residues in peptides and proteins that result from spontaneous decomposition of normal L-aspartyl and L-asparaginyl residues. It plays a role in the repair and/or degradation of damaged proteins. The polypeptide is Protein-L-isoaspartate O-methyltransferase (Ruegeria sp. (strain TM1040) (Silicibacter sp.)).